Reading from the N-terminus, the 608-residue chain is MCGIVGIVGNQPVSERLVEALKRLEYRGYDSAGVATIDAGTLQRRRAEGKLVNLESRLREEPLAGTIGIAHTRWATHGAPTERNAHPHFTEGVAVVHNGIIENFAELKDELAAGGAEFQTETDTEVVAHLLAKYRRDGLGRREAMHAMLKRVKGAYALAVLFEDDPSTIMAARNGPPLAIGHGSGEMFLGSDAIALAPFTNEITYLIDGDWAVIGKTGVHIFDFDGNVVERPRQISTAAAFLVDKGNHRHFMEKEIYEQPEVIAHALGHYVNFIENRVVPISDAIDFGKVPSLAISACGTAYLAGLIGKYWFERYARLPVEIDVASEFRYREIPLSPQSAALFISQSGETADTLASLRYCKEHGLKIGAVVNARESTIARESDAVFPILAGPEIGVASTKAFTCQLAVLAALAVGAGKARGTISGEEEQALVKSLAEMPRIMGQVLNSIQPKIESLSRELSKCHDVLYLGRGTSFPLAMEGALKLKEISYIHAEGYAAGELKHGPIALIDENMPVIVIAPHDRFFDKTVSNMQEVAARGGRIILITDEKGAAASKLDTMHTIVLPEVDEIIAPMIFSLPVQLLAYHTAVFMGTDVDQPRNLAKSVTVE.

C2 serves as the catalytic Nucleophile; for GATase activity. One can recognise a Glutamine amidotransferase type-2 domain in the interval 2–217 (CGIVGIVGNQ…DGDWAVIGKT (216 aa)). 2 SIS domains span residues 281–422 (ISDA…ARGT) and 456–598 (LSRE…VDQP). The active-site For Fru-6P isomerization activity is K603.

In terms of assembly, homodimer.

Its subcellular location is the cytoplasm. It catalyses the reaction D-fructose 6-phosphate + L-glutamine = D-glucosamine 6-phosphate + L-glutamate. In terms of biological role, catalyzes the first step in hexosamine metabolism, converting fructose-6P into glucosamine-6P using glutamine as a nitrogen source. This chain is Glutamine--fructose-6-phosphate aminotransferase [isomerizing], found in Rhizobium meliloti (strain 1021) (Ensifer meliloti).